Here is a 445-residue protein sequence, read N- to C-terminus: MQDTAKYLIHADITAAGVVERSDVVGAVFGQTEGLLGDELDLRDLQDSKKVGRIDVEIRSEGGQSFGEITVASGLDRVETAILAAALETIEQVGPCRAEIEVSEIEDVRSAKRREVVERATELLNDFEEKSIQTADIVETVRQQVRVADVTDYEGLPAGPRVADSDAIVVVEGRSDVMQLLKYGIKNAVAVEGTDVPDAIADLTAGRTVTSFLDGDRGGDLILKELAQVGDVDYVAVTPSDKSVEDLSRSEVMSALRDKVPYETVASAKSLDSIREEMSQAGESTTADGGAVAAATSDDAADNQPSPSSQTGSAKVETTDGTTSVVDNSNATAVADATTDEETTENGDGPTIPSLSDHIEAVIQTHSGTARLVDEDATLLAEGDADAVVSLLESTEDVPKTVVIDADCSQKLLDVAAQRGVDVVVAAGHGEYVKQPTAVQVRIES.

A Toprim domain is found at 166 to 252 (DAIVVVEGRS…SVEDLSRSEV (87 aa)). Mg(2+) is bound by residues E172, D214, and D216. The segment at 276 to 355 (EEMSQAGEST…NGDGPTIPSL (80 aa)) is disordered. Positions 284-298 (STTADGGAVAAATSD) are enriched in low complexity. Polar residues predominate over residues 303-313 (NQPSPSSQTGS). Residues 324 to 337 (SVVDNSNATAVADA) are compositionally biased toward low complexity.

Belongs to the archaeal DnaG primase family. In terms of assembly, forms a ternary complex with MCM helicase and DNA. It depends on Mg(2+) as a cofactor.

The catalysed reaction is ssDNA + n NTP = ssDNA/pppN(pN)n-1 hybrid + (n-1) diphosphate.. RNA polymerase that catalyzes the synthesis of short RNA molecules used as primers for DNA polymerase during DNA replication. The polypeptide is DNA primase DnaG (Haloarcula marismortui (strain ATCC 43049 / DSM 3752 / JCM 8966 / VKM B-1809) (Halobacterium marismortui)).